Here is a 439-residue protein sequence, read N- to C-terminus: High-energy light unresponsive protein 1 (439 aa).

Residues 1 to 67 (MPPPSSHSNI…LGLNQSIRPN (67 aa)) lie on the Cytoplasmic side of the membrane. Residues 68-88 (NSLLFRIYSWLVFCLLLFTTL) form a helical membrane-spanning segment. Topologically, residues 89–114 (RKFNQVGVRPNGTRENLQEFFANPRS) are extracellular. Residues 115 to 135 (MITLCNALIMLSGLLASLQLY) traverse the membrane as a helical segment. Residues 136–164 (TLGAKRLKPLKILCQFSLNVRTKQAERRQ) lie on the Cytoplasmic side of the membrane. A helical transmembrane segment spans residues 165 to 185 (FMINTFLAVFSGLLALTMAAT). At 186–211 (YAMSKWGYILYIVGTPNLDTETIFCV) the chain is on the extracellular side. The chain crosses the membrane as a helical span at residues 212–232 (LLDSYALFVSRAAISALAILF). The Cytoplasmic portion of the chain corresponds to 233–290 (YQHCSVIRRSIKHLINEMVPAEQDECPLPESSLQKIHDCQISYQRIFNGKAVIEEYYS). A helical transmembrane segment spans residues 291–311 (FVLFYSYGVCIPIFCFLMFVG). Topologically, residues 312–324 (MSAQSICWSEVVS) are extracellular. Residues 325–345 (IVIWIVNAILVLLLFSLPAFM) form a helical membrane-spanning segment. The Cytoplasmic portion of the chain corresponds to 346 to 402 (INEDGDRLVASSFRMYHETFHEERDLTVLSQMTFFTFQIHSTKLTLSACNYFYMDRS). The chain crosses the membrane as a helical span at residues 403–423 (ILLSLFSAILTYFLILWEFDI). The Extracellular portion of the chain corresponds to 424 to 439 (KNNQSLQNIANHTIHT).

Belongs to the insect chemoreceptor superfamily. Gustatory receptor (GR) family. Expressed in the AVG and PVT neurons of the tail.

The protein resides in the cell membrane. Functionally, photoreceptor for short wavelength (UV) light that mediates UV-light-induced avoidance behavior. Directly senses and absorbs both UV-A and UV-B light with very high efficiency. Absorption of UV-B but not UV-A light shows resistance to photobleaching. In contrast to other photoreceptors, does not use a prosthetic chromophore to capture photons and only depends on its protein conformation. Might have a role in response to white light exposure. This is High-energy light unresponsive protein 1 from Caenorhabditis elegans.